The chain runs to 135 residues: UPF0329 protein ECU07_1860/ECU10_0040/ECU11_2100 (135 aa).

Belongs to the UPF0329 family.

The polypeptide is UPF0329 protein ECU07_1860/ECU10_0040/ECU11_2100 (Encephalitozoon cuniculi (strain GB-M1) (Microsporidian parasite)).